The following is a 2432-amino-acid chain: Polyprotein P1234 (2432 aa).

In terms of domain architecture, Alphavirus-like MT spans 29-260 (ESLQVTPNDH…ESRKLLRSWH (232 aa)). Positions 245-264 (GSTLYTESRKLLRSWHLPSV) are nsP1 membrane-binding. Residues cysteine 418 and cysteine 420 are each lipidated (S-palmitoyl cysteine; by host). Residues 692-844 (ELTNPPFHEF…HNICTEVCHK (153 aa)) form the (+)RNA virus helicase ATP-binding domain. Residue 723 to 730 (GVPGSGKS) coordinates a ribonucleoside 5'-triphosphate. Residues 845-993 (SISRRCTRPV…LEEWQEEHDK (149 aa)) form the (+)RNA virus helicase C-terminal domain. The region spanning 1006 to 1329 (DAFQNKANVC…TKLSAVYAGE (324 aa)) is the Peptidase C9 domain. The interval 1007 to 1026 (AFQNKANVCWAKSLVPVLDT) is nucleolus localization signal. Cysteine 1015 (for cysteine protease nsP2 activity) is an active-site residue. The Nuclear export signal motif lies at 1060 to 1069 (TKYYGVDLDS). The active-site For cysteine protease nsP2 activity is the histidine 1085. A Nuclear localization signal motif is present at residues 1184-1188 (PRRRV). The Macro domain occupies 1337–1495 (APSYRVKRAD…KKIQEAIDMR (159 aa)). ADP-D-ribose-binding residues include aspartate 1346, asparagine 1360, glycine 1368, glycine 1448, valine 1449, and phenylalanine 1450. 4 residues coordinate Zn(2+): cysteine 1598, cysteine 1600, cysteine 1623, and cysteine 1641. A phosphothreonine; by host mark is found at threonine 1680 and threonine 1681. The tract at residues 1759-1779 (RAAERPVPAPRKPTPAPRTAF) is disordered. A compositionally biased stretch (pro residues) spans 1765–1774 (VPAPRKPTPA). Short sequence motifs (FGDF; binding to host G3BP1) lie at residues 1787 to 1790 (FGDF) and 1804 to 1807 (FGDF). One can recognise a RdRp catalytic domain in the interval 2182–2297 (GDPVLETDIA…VHGVISDKLM (116 aa)).

In terms of assembly, interacts with non-structural protein 3. Interacts with RNA-directed RNA polymerase nsP4. Interacts with protease nsP2. interacts with itself. Interacts with mRNA-capping enzyme nsP1. Interacts with host DDX1. Interacts with host DDX3. Interacts (via C-terminus) with host G3BP1; this interaction inhibits the formation of host stress granules on viral mRNAs and the nsp3-G3BP1 complexes bind viral RNAs and probably orchestrate the assembly of viral replication complexes. Interacts (via C-terminus) with host G3BP2; this interaction inhibits the formation of host stress granules on viral mRNAs and the nsp3-G3BP2 complexes bind viral RNAs and probably orchestrate the assembly of viral replication complexes. As to quaternary structure, interacts with mRNA-capping enzyme nsP1. Interacts with protease nsP2. interacts with itself. In terms of assembly, interacts with RNA-directed RNA polymerase nsP4. Interacts with mRNA-capping enzyme nsP1. Interacts with KPNA1/karyopherin-alpha1; this interaction probably allows the active transport of protease nsP2 into the host nucleus. It depends on Mg(2+) as a cofactor. Mn(2+) is required as a cofactor. In terms of processing, specific enzymatic cleavages in vivo yield mature proteins. The processing of the polyprotein is temporally regulated. In early stages (1.7 hpi), P1234 is first cleaved in trans through its nsP2 protease activity, releasing P123' and nsP4, which associate to form the early replication complex. At the same time, P1234 is also cut at the nsP1/nsP2 site early in infection but with lower efficiency. After replication of the viral minus-strand RNAs (4 hpi), the polyproteins are cut at the nsP1/nsP2 and nsP2/nsP3 sites very efficiently, preventing accumulation of P123' and P1234 and allowing the formation of the late replication complex. NsP3'/nsP4 site is not cleaved anymore and P34 is produced rather than nsP4. Specific enzymatic cleavages in vivo yield mature proteins. The processing of the polyprotein is temporally regulated. In early stages (1.7 hpi), P123' is cleaved at the nsP1/nsP2 site with low efficiency. After replication of the viral minus-strand RNAs (4 hpi), the polyproteins are cut at the nsP1/nsP2 and nsP2/nsP3 sites very efficiently, preventing accumulation of P123' and allowing the formation of the late replication complex. Post-translationally, specific enzymatic cleavages in vivo yield mature proteins. The processing of the polyprotein is temporally regulated. In early stages (1.7 hpi), P123 is cleaved at the nsP1/nsP2 site with low efficiency. After replication of the viral minus-strand RNAs (4 hpi), the polyproteins are cut at the nsP1/nsP2 and nsP2/nsP3 sites very efficiently, preventing accumulation of P123 and allowing the formation of the late replication complex. In terms of processing, palmitoylated by host palmitoyltransferases ZDHHC2 and ZDHHC19. Phosphorylated by host on serines and threonines. Post-translationally, ubiquitinated; targets the protein for rapid degradation via the ubiquitin system. Nsp4 is present in extremely low quantities due to low frequency of translation through the amber stop-codon and the degradation by the ubiquitin pathway.

It localises to the host cytoplasmic vesicle membrane. Its subcellular location is the host cell membrane. The protein resides in the host cell projection. It is found in the host filopodium. The protein localises to the host nucleus. It localises to the host cytoplasm. The enzyme catalyses GTP + S-adenosyl-L-methionine = N(7)-methyl-GTP + S-adenosyl-L-homocysteine. It catalyses the reaction N(7)-methyl-GTP + L-histidyl-[protein] = N(tele)-(N(7)-methylguanosine 5'-phospho)-L-histidyl-[protein] + diphosphate. The catalysed reaction is N(tele)-(N(7)-methylguanosine 5'-phospho)-L-histidyl-[protein] + a 5'-end diphospho-(purine-ribonucleoside) in mRNA + H(+) = a 5'-end (N(7)-methyl 5'-triphosphoguanosine)-(purine-ribonucleoside) in mRNA + L-histidyl-[protein]. It carries out the reaction a 5'-end triphospho-ribonucleoside in mRNA + H2O = a 5'-end diphospho-ribonucleoside in mRNA + phosphate + H(+). The enzyme catalyses a ribonucleoside 5'-triphosphate + H2O = a ribonucleoside 5'-diphosphate + phosphate + H(+). It catalyses the reaction ATP + H2O = ADP + phosphate + H(+). The catalysed reaction is RNA(n) + a ribonucleoside 5'-triphosphate = RNA(n+1) + diphosphate. It carries out the reaction RNA(n) + ATP = RNA(n)-3'-adenine ribonucleotide + diphosphate. The enzyme catalyses 4-O-(ADP-D-ribosyl)-L-aspartyl-[protein] + H2O = L-aspartyl-[protein] + ADP-D-ribose + H(+). It catalyses the reaction 5-O-(ADP-D-ribosyl)-L-glutamyl-[protein] + H2O = L-glutamyl-[protein] + ADP-D-ribose + H(+). The catalysed reaction is ADP-alpha-D-ribose 1''-phosphate + H2O = ADP-D-ribose + phosphate. Inhibited by N-ethylmaleimide, Zn(2+), and Cu2(2+). Functionally, inactive precursor of the viral replicase, which is activated by cleavages carried out by the viral protease nsP2. The early replication complex formed by the polyprotein P123 and nsP4 synthesizes minus-strand RNAs. As soon P123 is cleaved into mature proteins, the plus-strand RNAs synthesis begins. Its function is as follows. The early replication complex formed by the polyprotein P123' and nsP4 synthesizes minus-strand RNAs. Polyprotein P123' is a short-lived polyprotein that accumulates during early stage of infection. As soon P123' is cleaved into mature proteins, the plus-strand RNAs synthesis begins. In terms of biological role, cytoplasmic capping enzyme that catalyzes two virus-specific reactions: methyltransferase and nsP1 guanylyltransferase. mRNA-capping is necessary since all viral RNAs are synthesized in the cytoplasm, and host capping enzymes are restricted to the nucleus. The enzymatic reaction involves a covalent link between 7-methyl-GMP and nsP1, whereas eukaryotic capping enzymes form a covalent complex only with GMP. nsP1 capping consists in the following reactions: GTP is first methylated into 7-methyl-GMP and then is covalently linked to nsP1 to form the m7GMp-nsP1 complex from which 7-methyl-GMP complex is transferred to the mRNA to create the cap structure. NsP1 is also needed for the initiation of the minus-strand RNAs synthesis. Probably serves as a membrane anchor for the replication complex composed of nsP1-nsP4. Palmitoylated nsP1 is remodeling host cell cytoskeleton, and induces filopodium-like structure formation at the surface of the host cell. Functionally, multifunctional protein whose N-terminus is part of the RNA polymerase complex and displays NTPase, RNA triphosphatase and helicase activities. NTPase and RNA triphosphatase are involved in viral RNA capping and helicase keeps a check on the dsRNA replication intermediates. The C-terminus harbors a protease that specifically cleaves and releases the mature proteins. Required for the shutoff of minus-strand RNAs synthesis. Specifically inhibits the host IFN response by promoting the nuclear export of host STAT1. Also inhibits host transcription by inducing rapid proteasome-dependent degradation of POLR2A, a catalytic subunit of the RNAPII complex. The resulting inhibition of cellular protein synthesis serves to ensure maximal viral gene expression and to evade host immune response. Seems to be essential for minus-strand RNAs and subgenomic 26S mRNAs synthesis. Displays mono-ADP-ribosylhydrolase activity. ADP-ribosylation is a post-translational modification that controls various processes of the host cell and the virus probably needs to revert it for optimal viral replication. Binds proteins of FXR family and sequesters them into the viral RNA replication complexes thereby inhibiting the formation of host stress granules on viral mRNAs. The nsp3'-FXR complexes bind viral RNAs and probably orchestrate the assembly of viral replication complexes, thanks to the ability of FXR family members to self-assemble and bind DNA. Its function is as follows. Seems to be essential for minus-strand RNAs and subgenomic 26S mRNAs synthesis. Displays mono-ADP-ribosylhydrolase activity. ADP-ribosylation is a post-translational modification that controls various processes of the host cell and the virus probably needs to revert it for optimal viral replication. Binds proteins of G3BP family and sequesters them into the viral RNA replication complexes thereby inhibiting the formation of host stress granules on viral mRNAs. The nsp3-G3BP complexes bind viral RNAs and probably orchestrate the assembly of viral replication complexes, thanks to the ability of G3BP family members to self-assemble and bind DNA. In terms of biological role, RNA dependent RNA polymerase. Replicates genomic and antigenomic RNA by recognizing replications specific signals. The early replication complex formed by the polyprotein P123 and nsP4 synthesizes minus-strand RNAs. The late replication complex composed of fully processed nsP1-nsP4 is responsible for the production of genomic and subgenomic plus-strand RNAs. In Aedes (Middle-African hedgehog), this protein is Polyprotein P1234.